Here is a 509-residue protein sequence, read N- to C-terminus: Sorting nexin MVP1 (509 aa).

Residues 1 to 25 (MDTYSGQNGWADTSNASPWGDTNDT) show a composition bias toward polar residues. The tract at residues 1–28 (MDTYSGQNGWADTSNASPWGDTNDTMPI) is disordered. The PX domain occupies 126-245 (QLDIISIEEI…TFLTVPTDLT (120 aa)). Positions 170, 172, 196, and 211 each coordinate a 1,2-diacyl-sn-glycero-3-phospho-(1D-myo-inositol-3-phosphate).

It belongs to the sorting nexin family.

The protein resides in the cytoplasm. It is found in the membrane. Its function is as follows. Required for vacuolar protein sorting. The chain is Sorting nexin MVP1 (MVP1) from Candida glabrata (strain ATCC 2001 / BCRC 20586 / JCM 3761 / NBRC 0622 / NRRL Y-65 / CBS 138) (Yeast).